A 343-amino-acid chain; its full sequence is KRR1 small subunit processome component homolog (343 aa).

One can recognise a KH domain in the interval 126–194 (DIIKIGNLVH…VRDIVLETMN (69 aa)). The segment covering 230-246 (KNKNISKRKQPKNKKPK) has biased composition (basic residues). The segment at 230-343 (KNKNISKRKQ…LMKANKKNRS (114 aa)) is disordered. Basic and acidic residues-rich tracts occupy residues 272–303 (LNKE…RNKD) and 318–331 (RPAE…DALK). Positions 272 to 341 (LNKEQKQAKK…AKLMKANKKN (70 aa)) form a coiled coil. Residues 333–343 (KLMKANKKNRS) show a composition bias toward basic residues.

This sequence belongs to the KRR1 family. As to quaternary structure, monomer. Component of the ribosomal small subunit (SSU) processome.

It is found in the nucleus. The protein localises to the nucleolus. Its function is as follows. Required for 40S ribosome biogenesis. Involved in nucleolar processing of pre-18S ribosomal RNA and ribosome assembly. Binds to RNA. Required for female germline development, cell viability during eye development and for survival of dividing cells and epithelial cells during early wing disk development. The polypeptide is KRR1 small subunit processome component homolog (Drosophila virilis (Fruit fly)).